The following is a 994-amino-acid chain: Bifunctional glutamine synthetase adenylyltransferase/adenylyl-removing enzyme (994 aa).

The segment at 1-487 is adenylyl removase; sequence MVVTKLATQR…LHTKLFYQPL (487 aa). An adenylyl transferase region spans residues 492 to 994; it reads GPTGLEIAHG…KAVVRKVFGS (503 aa).

Belongs to the GlnE family. Mg(2+) serves as cofactor.

It catalyses the reaction [glutamine synthetase]-O(4)-(5'-adenylyl)-L-tyrosine + phosphate = [glutamine synthetase]-L-tyrosine + ADP. The enzyme catalyses [glutamine synthetase]-L-tyrosine + ATP = [glutamine synthetase]-O(4)-(5'-adenylyl)-L-tyrosine + diphosphate. Its function is as follows. Involved in the regulation of glutamine synthetase GlnA, a key enzyme in the process to assimilate ammonia. When cellular nitrogen levels are high, the C-terminal adenylyl transferase (AT) inactivates GlnA by covalent transfer of an adenylyl group from ATP to specific tyrosine residue of GlnA, thus reducing its activity. Conversely, when nitrogen levels are low, the N-terminal adenylyl removase (AR) activates GlnA by removing the adenylyl group by phosphorolysis, increasing its activity. The regulatory region of GlnE binds the signal transduction protein PII (GlnB) which indicates the nitrogen status of the cell. The polypeptide is Bifunctional glutamine synthetase adenylyltransferase/adenylyl-removing enzyme (Mycobacterium tuberculosis (strain CDC 1551 / Oshkosh)).